The chain runs to 280 residues: MNKRELESAIVTDFSKRMSYGDYLCLDQLLDCQHPLSNPQHHDEMLFVVQHQTSELWMKLMLHELQAARILVQQDKLSHCFKILARVKQIQRLLFEQWAVLETLTPSEYVEFRDVLGNSSGFQSHQYRSIEFLLGNKNAAMLAVFSNDADKHAALKAILEAPSLYDEYLLYLSRHGLPIPQECIERDWTQPYQRNPDLLPAFKEIYDHPQKYWEAYEMAEKLVDIEESFHLWRFRHMKTVERIIGFKTGTGGSSGVSFLKKALELTFFPELLDVRTEIGA.

Residues 47–51, Y109, and R113 each bind substrate; that span reads FVVQH. H236 is a heme binding site. T250 is a binding site for substrate.

It belongs to the tryptophan 2,3-dioxygenase family. In terms of assembly, homotetramer. Heme is required as a cofactor.

It carries out the reaction L-tryptophan + O2 = N-formyl-L-kynurenine. Its pathway is amino-acid degradation; L-tryptophan degradation via kynurenine pathway; L-kynurenine from L-tryptophan: step 1/2. In terms of biological role, heme-dependent dioxygenase that catalyzes the oxidative cleavage of the L-tryptophan (L-Trp) pyrrole ring and converts L-tryptophan to N-formyl-L-kynurenine. Catalyzes the oxidative cleavage of the indole moiety. The chain is Tryptophan 2,3-dioxygenase from Serratia proteamaculans (strain 568).